The following is a 313-amino-acid chain: Porphobilinogen deaminase (313 aa).

C241 bears the S-(dipyrrolylmethanemethyl)cysteine mark.

This sequence belongs to the HMBS family. Monomer. Dipyrromethane is required as a cofactor.

The enzyme catalyses 4 porphobilinogen + H2O = hydroxymethylbilane + 4 NH4(+). It participates in porphyrin-containing compound metabolism; protoporphyrin-IX biosynthesis; coproporphyrinogen-III from 5-aminolevulinate: step 2/4. Functionally, tetrapolymerization of the monopyrrole PBG into the hydroxymethylbilane pre-uroporphyrinogen in several discrete steps. The polypeptide is Porphobilinogen deaminase (Bacillus velezensis (strain DSM 23117 / BGSC 10A6 / LMG 26770 / FZB42) (Bacillus amyloliquefaciens subsp. plantarum)).